The primary structure comprises 512 residues: Glutamyl-tRNA(Gln) amidotransferase subunit A (512 aa).

Residues lysine 82 and serine 157 each act as charge relay system in the active site. The Acyl-ester intermediate role is filled by serine 181.

It belongs to the amidase family. GatA subfamily. As to quaternary structure, heterotrimer of A, B and C subunits.

It carries out the reaction L-glutamyl-tRNA(Gln) + L-glutamine + ATP + H2O = L-glutaminyl-tRNA(Gln) + L-glutamate + ADP + phosphate + H(+). In terms of biological role, allows the formation of correctly charged Gln-tRNA(Gln) through the transamidation of misacylated Glu-tRNA(Gln) in organisms which lack glutaminyl-tRNA synthetase. The reaction takes place in the presence of glutamine and ATP through an activated gamma-phospho-Glu-tRNA(Gln). The protein is Glutamyl-tRNA(Gln) amidotransferase subunit A of Bordetella petrii (strain ATCC BAA-461 / DSM 12804 / CCUG 43448).